A 132-amino-acid polypeptide reads, in one-letter code: Small ribosomal subunit protein uS8 (132 aa).

It belongs to the universal ribosomal protein uS8 family. As to quaternary structure, part of the 30S ribosomal subunit. Contacts proteins S5 and S12.

Functionally, one of the primary rRNA binding proteins, it binds directly to 16S rRNA central domain where it helps coordinate assembly of the platform of the 30S subunit. The sequence is that of Small ribosomal subunit protein uS8 from Mycolicibacterium smegmatis (strain ATCC 700084 / mc(2)155) (Mycobacterium smegmatis).